The primary structure comprises 66 residues: uncharacterized protein (66 aa).

The interval 1–21 (MPGGDRTGPWGQGPRTGRRAG) is disordered.

This is an uncharacterized protein from Archaeoglobus fulgidus (strain ATCC 49558 / DSM 4304 / JCM 9628 / NBRC 100126 / VC-16).